Here is a 392-residue protein sequence, read N- to C-terminus: Y' element ATP-dependent helicase YFL066C (392 aa).

The Helicase ATP-binding domain maps to 1-175 (MADTPSVAVQ…LQRIGLTGLA (175 aa)). 11 to 18 (APPGYGKT) is an ATP binding site. One can recognise a Helicase C-terminal domain in the interval 232–381 (KLLLALFEIE…EFYGLESKKG (150 aa)).

Belongs to the helicase family. Yeast subtelomeric Y' repeat subfamily.

Its function is as follows. Catalyzes DNA unwinding and is involved in telomerase-independent telomere maintenance. This is Y' element ATP-dependent helicase YFL066C from Saccharomyces cerevisiae (strain ATCC 204508 / S288c) (Baker's yeast).